Here is a 91-residue protein sequence, read N- to C-terminus: Small ribosomal subunit protein uS17 (91 aa).

This sequence belongs to the universal ribosomal protein uS17 family. Part of the 30S ribosomal subunit.

One of the primary rRNA binding proteins, it binds specifically to the 5'-end of 16S ribosomal RNA. The protein is Small ribosomal subunit protein uS17 of Psychrobacter cryohalolentis (strain ATCC BAA-1226 / DSM 17306 / VKM B-2378 / K5).